The primary structure comprises 78 residues: uncharacterized protein (78 aa).

The N-terminal stretch at 1–45 is a signal peptide; that stretch reads MPVIAIIAIVIIVIILNKTGVSDSLTALTLATVAALLTGGGAAGA.

It to E.coli YkfL.

This is an uncharacterized protein from Escherichia coli (strain K12).